Consider the following 187-residue polypeptide: Proenkephalin-A (187 aa).

Propeptides lie at residues 52-70 (MDELYPQEPEEEAPAEILA), 80-143 (DAEE…KMLQ), 153-163 (VGRPEWWMDYQ), and 173-187 (FADSLPSDEEGESYS). Positions 81–132 (AEEEEDALASSSDLLKELLGPGETETAAAPRGRDDEDVSKSHGGFMRALKGS) are disordered. Residues 88–99 (LASSSDLLKELL) show a composition bias toward low complexity. A compositionally biased stretch (basic and acidic residues) spans 111–120 (RGRDDEDVSK). S187 is modified (phosphoserine).

This sequence belongs to the opioid neuropeptide precursor family. Processed and degraded by ACE. Post-translationally, the N-terminal domain contains 6 conserved cysteines thought to be involved in disulfide bonding and/or processing. In terms of processing, proenkephalin-A is cleaved by CTSL to generate Met-enkephalin.

It is found in the cytoplasmic vesicle. The protein resides in the secretory vesicle. The protein localises to the chromaffin granule lumen. It localises to the secreted. Its function is as follows. Neuropeptide that competes with and mimic the effects of opiate drugs. They play a role in a number of physiologic functions, including pain perception and responses to stress. This Felis catus (Cat) protein is Proenkephalin-A (PENK).